The chain runs to 286 residues: 1D-myo-inositol 2-acetamido-2-deoxy-alpha-D-glucopyranoside deacetylase (286 aa).

Zn(2+)-binding residues include His12, Asp15, and His147.

Belongs to the MshB deacetylase family. Requires Zn(2+) as cofactor.

The catalysed reaction is 1D-myo-inositol 2-acetamido-2-deoxy-alpha-D-glucopyranoside + H2O = 1D-myo-inositol 2-amino-2-deoxy-alpha-D-glucopyranoside + acetate. Its function is as follows. Catalyzes the deacetylation of 1D-myo-inositol 2-acetamido-2-deoxy-alpha-D-glucopyranoside (GlcNAc-Ins) in the mycothiol biosynthesis pathway. This is 1D-myo-inositol 2-acetamido-2-deoxy-alpha-D-glucopyranoside deacetylase from Thermobifida fusca (strain YX).